The primary structure comprises 1177 residues: Dynein axonemal assembly factor 9 (1177 aa).

The interval 1–27 (MDVYPPRRQGLPRARSPGGSSRGSPSV) is disordered. Residues 11-27 (LPRARSPGGSSRGSPSV) show a composition bias toward low complexity.

In terms of assembly, interacts with ARL3.

Its function is as follows. May act as an effector for ARL3. The chain is Dynein axonemal assembly factor 9 from Homo sapiens (Human).